We begin with the raw amino-acid sequence, 1039 residues long: Probable inorganic carbon transporter subunit DabA 1 (1039 aa).

C462, D464, H721, and C736 together coordinate Zn(2+).

The protein belongs to the inorganic carbon transporter (TC 9.A.2) DabA family. In terms of assembly, forms a complex with DabB. The cofactor is Zn(2+).

The protein resides in the cell inner membrane. Its function is as follows. Part of an energy-coupled inorganic carbon pump. The protein is Probable inorganic carbon transporter subunit DabA 1 of Nitrobacter hamburgensis (strain DSM 10229 / NCIMB 13809 / X14).